A 276-amino-acid polypeptide reads, in one-letter code: Diaminopimelate epimerase (276 aa).

Positions 13, 46, and 66 each coordinate substrate. Cysteine 75 functions as the Proton donor in the catalytic mechanism. Residues 76–77 (GN), asparagine 159, asparagine 192, and 210–211 (ER) each bind substrate. Cysteine 219 (proton acceptor) is an active-site residue. Residue 220 to 221 (GT) coordinates substrate.

It belongs to the diaminopimelate epimerase family. Homodimer.

The protein resides in the cytoplasm. The catalysed reaction is (2S,6S)-2,6-diaminopimelate = meso-2,6-diaminopimelate. The protein operates within amino-acid biosynthesis; L-lysine biosynthesis via DAP pathway; DL-2,6-diaminopimelate from LL-2,6-diaminopimelate: step 1/1. Its function is as follows. Catalyzes the stereoinversion of LL-2,6-diaminopimelate (L,L-DAP) to meso-diaminopimelate (meso-DAP), a precursor of L-lysine and an essential component of the bacterial peptidoglycan. This chain is Diaminopimelate epimerase, found in Hahella chejuensis (strain KCTC 2396).